The following is a 1593-amino-acid chain: MAAATLSFGPEREAEPAKEARVVGSELVDTYTVYVIQVTDGNHEWTIKHRYSDFHDLHEKLVAERKIDKSLLPPKKIIGKNSRSLVEKRERDLEVYLQTLLTTFPDVAPRVLAHFLHFHLYEVNGVTAALAEELFEKGEQLLGAGEVFAIRPLQLYAITEQLQQGKPTCASGDAKTDLGHILDFTCRLKYLKVSGTEGPFGTSNIKEQLLPFDLSIFKSLHQVEISHCDAKHIRGLVTSKPTLATMSVRFSATSMKEVLAPEASEFDEWEPEGTATLGGPVTAIIPTWQALTTLDLSHNSICEIDESVKLIPKIEYLDLSHNGLRVVDNLQHLYNLVHLDLSYNKLSSLEGVHTKLGNVKTLNLAGNFLESLSGLHKLYSLVNVDLRDNRIEQLDEVKSIGSLPCLERLTLLNNPLSIIPDYRTKVLSQFGERASEICLDDVATTEKELDTVEVLKAIQKAKDVKSKLSNTEKKAGEDFRLPPAPCIRPGGSPPAAPASASLPQPILSNQGIMFVQEEALASSLSSTDSLPPEDHRPIARACSDSLESIPAGQVASDDLRDVPGAVGGVSPDHAEPEVQVVPGSGQIIFLPFTCIGYTATNQDFIQRLSTLIRQAIERQLPAWIEAANQREEAHGEQGEEEEEEEEEEDVAENRYFEMGPPDAEEEEGSGQGEEDEEDEDEEAEEERLALEWALGADEDFLLEHIRILKVLWCFLIHVQGSIRQFAACLVLTDFGIAVFEIPHQESRGSSQHILSSLRFVFCFPHGDLTEFGFLMPELCLVLKVRHSENTLFIISDAANLHEFHADLRSCFAPQHMAMLCSPILYGSHTTLQEFLRQLLTFYKVAGGSQERSQGCFPVYLVYSDKRMVQTPAGDYSGNIEWASCTLCSAVRRSCCAPSEAVKSAAIPYWLLLTSQHLNVIKADFNPMPNRGTHNCRNRNSFKLSRVPLSTVLLDPTRSCTQPRGAFADGHVLELLVGYRFVTAIFVLPHEKFHFLRVYNQLRASLQDLKTVVISKNPSAKPRNQPAKSRASAEQRLQETPADAPAPAAVPPTASAPAPAEALAPDLAPVQAPGEDRGLTSAEAPAAAEAPAAAEAPAAAEAPAAAEAPAAAEAPAAAEAPAPAEAPAAAEAPAAAEAPAAAEAPAAAEAPASAEAPAPNQAPAPARGPAPARGPAPAGGPAPAEALAQAEVPAQYPSERLIQSTSEENQIPSHLPVCPSLQHIARLRGRAIIDLFHNSIAEVENEELRHLLWSSVVFYQTPGLEVTACVLLSSKAVYFILHDGLRRYFSEPLQDFWHQKNTDYNNSPFHVSQCFVLKLSDLQSVNVGLFDQYFRLTGSSPTQVVTCLTRDSYLTHCFLQHLMLVLSSLERTPSPEPVDKDFYSEFGDKNTGKMENYELIHSSRVKFTYPSEEEVGDLTYIVAQKMADPAKNPALSILLYIQAFQVVTPHLGRGRGPLRPKTLLLTSAEIFLLDEDYIHYPLPEFAKEPPQRDRYRLDDGRRVRDLDRVLMGYYPYPQALTLVFDDTQGHDLMGSVTLDHFGEMPGGPGRVGQGREVQWQVFVPSAESREKLISLLARQWEALCGRELPVELTG.

The tract at residues 1–134 is necessary for binding to phosphoinositide-3-P; not sufficient for targeting to endosomes; the sequence is MAAATLSFGP…GVTAALAEEL (134 aa). In terms of domain architecture, PX spans 12–122; sequence REAEPAKEAR…AHFLHFHLYE (111 aa). The interval 121–695 is necessary for homooligomerization and targeting to endosomes; that stretch reads YEVNGVTAAL…ERLALEWALG (575 aa). Residues 246 to 869 are interaction with PAK1; that stretch reads MSVRFSATSM…LVYSDKRMVQ (624 aa). LRR repeat units lie at residues 290-311, 313-334, 335-356, 358-379, 380-401, and 405-426; these read ALTT…VKLI, KIEY…QHLY, NLVH…HTKL, NVKT…HKLY, SLVN…KSIG, and CLER…RTKV. A compositionally biased stretch (basic and acidic residues) spans 466–480; the sequence is SKLSNTEKKAGEDFR. Residues 466-499 are disordered; sequence SKLSNTEKKAGEDFRLPPAPCIRPGGSPPAAPAS. Positions 482-496 are enriched in pro residues; it reads PPAPCIRPGGSPPAA. A phosphoserine mark is found at Ser543, Ser545, and Ser548. The stretch at 624 to 694 forms a coiled coil; it reads IEAANQREEA…EERLALEWAL (71 aa). The disordered stretch occupies residues 629–687; it reads QREEAHGEQGEEEEEEEEEEDVAENRYFEMGPPDAEEEEGSGQGEEDEEDEDEEAEEER. Acidic residues-rich tracts occupy residues 638 to 650 and 662 to 685; these read GEEE…EEDV and DAEE…EAEE. The interaction with LIMK stretch occupies residues 661 to 869; the sequence is PDAEEEEGSG…LVYSDKRMVQ (209 aa). An interaction with ITGA5 region spans residues 709–807; it reads KVLWCFLIHV…ANLHEFHADL (99 aa). The segment at 1016–1185 is disordered; the sequence is NPSAKPRNQP…PAGGPAPAEA (170 aa). Low complexity-rich tracts occupy residues 1038–1069 and 1081–1158; these read ETPA…LAPV and AEAP…APAP. Repeat copies occupy residues 1081 to 1086, 1087 to 1092, 1093 to 1098, 1099 to 1104, 1105 to 1110, 1111 to 1116, 1123 to 1128, 1129 to 1134, 1135 to 1140, and 1141 to 1146. Residues 1081-1146 are 10 X 6 AA tandem repeat of A-E-A-P-A-A; the sequence is AEAPAAAEAP…APAAAEAPAA (66 aa). The span at 1159–1179 shows a compositional bias: pro residues; it reads NQAPAPARGPAPARGPAPAGG. Thr1371 carries the phosphothreonine modification. The residue at position 1373 (Ser1373) is a Phosphoserine.

In terms of assembly, homooligomer. Interacts with GRB2. Interacts with PIK3R1; probably associates with the PI3-kinase complex. Interacts with IRS4. Found in a complex with ITGA5 and PAK1. Found in a complex with LIMK1 and PAK1. Interacts with ITGA5 (via cytoplasmic domain); this interaction is direct. Interacts with PAK1 (via kinase domain); this interaction is direct and is increased upon activation of PAK1. Interacts with LIMK1 (via PDZ and kinase domain); this interaction is direct. Interacts with LIMK2; this interaction depends on LIMK2 activity. Interacts with RAC1 (activated state). Interacts with STK11; this interaction may increase STK11 activity. Highly expressed in brain and kidney. Moderately expressed in heart, liver, lung and skeletal muscle. Not detected in spleen and testis.

It is found in the cell membrane. It localises to the cytoplasm. Its subcellular location is the early endosome. The protein resides in the recycling endosome. In terms of biological role, acts either as the functional imidazoline-1 receptor (I1R) candidate or as a membrane-associated mediator of the I1R signaling. Binds numerous imidazoline ligands that induces initiation of cell-signaling cascades triggering to cell survival, growth and migration. Its activation by the agonist rilmenidine induces an increase in phosphorylation of mitogen-activated protein kinases MAPK1 and MAPK3 in rostral ventrolateral medulla (RVLM) neurons that exhibited rilmenidine-evoked hypotension. Blocking its activation with efaroxan abolished rilmenidine-induced mitogen-activated protein kinase phosphorylation in RVLM neurons. Acts as a modulator of Rac-regulated signal transduction pathways. Suppresses Rac1-stimulated cell migration by interacting with PAK1 and inhibiting its kinase activity. Also blocks Pak-independent Rac signaling by interacting with RAC1 and inhibiting Rac1-stimulated NF-kB response element and cyclin D1 promoter activation. Also inhibits LIMK1 kinase activity by reducing LIMK1 'Tyr-508' phosphorylation. Inhibits Rac-induced cell migration and invasion in breast and colon epithelial cells. Inhibits lamellipodia formation, when overexpressed. Plays a role in protection against apoptosis. Involved in association with IRS4 in the enhancement of insulin activation of MAPK1 and MAPK3. When overexpressed, induces a redistribution of cell surface ITGA5 integrin to intracellular endosomal structures. This chain is Nischarin (Nisch), found in Mus musculus (Mouse).